The sequence spans 221 residues: Germin-like protein subfamily 1 member 17 (221 aa).

The signal sequence occupies residues 1-21; that stretch reads MKVSMSLILITLSALVTIAKA. A disulfide bridge connects residues cysteine 31 and cysteine 48. One can recognise a Cupin type-1 domain in the interval 76–213; the sequence is SNVTTVNVDQ…AFQLDVNVVK (138 aa). Residue asparagine 77 is glycosylated (N-linked (GlcNAc...) asparagine). The Mn(2+) site is built by histidine 110, histidine 112, glutamate 117, and histidine 159.

This sequence belongs to the germin family. Oligomer (believed to be a pentamer but probably hexamer).

The protein resides in the secreted. It is found in the extracellular space. The protein localises to the apoplast. May play a role in plant defense. Probably has no oxalate oxidase activity even if the active site is conserved. This Arabidopsis thaliana (Mouse-ear cress) protein is Germin-like protein subfamily 1 member 17.